A 446-amino-acid polypeptide reads, in one-letter code: Oxysterols receptor LXR-beta (446 aa).

The segment covering 1-28 (MSSPTSSLDTPLPGNGSPQPSTSSTSPT) has biased composition (low complexity). The tract at residues 1 to 69 (MSSPTSSLDT…PERKRKKGPA (69 aa)) is disordered. The segment at 1–76 (MSSPTSSLDT…GPAPKMLGHE (76 aa)) is transactivation AF-1; required for ligand-independent transactivation function. Positions 75 to 152 (HELCRVCGDK…AGMREQCVLS (78 aa)) form a DNA-binding region, nuclear receptor. NR C4-type zinc fingers lie at residues 78-98 (CRVC…CEGC) and 116-140 (CRGS…LRKC). Positions 160–201 (KIQKQQQQQPPPPTEPASGSSARPAASPGTSEASSQGSGEGE) are disordered. The span at 175-196 (PASGSSARPAASPGTSEASSQG) shows a compositional bias: low complexity. Residues 205-446 (LTAAQELMIQ…LLSEIWDVHE (242 aa)) are transactivation AF-2; required for ligand-dependent transactivation function; mediates interaction with CCAR2. Positions 208–446 (AQELMIQQLV…LLSEIWDVHE (239 aa)) constitute an NR LBD domain. Glycyl lysine isopeptide (Lys-Gly) (interchain with G-Cter in SUMO2) cross-links involve residues Lys-395 and Lys-433.

Belongs to the nuclear hormone receptor family. NR1 subfamily. In terms of assembly, forms a heterodimer with RXR. Interacts with CCAR2 (via N-terminus) in a ligand-independent manner. Interacts (when sumoylated) with GPS2; interaction with GPS2 onto hepatic acute phase protein promoters prevents N-Cor corepressor complex dissociation. Interacts with ABCA12 and ABCA1; this interaction is required for ABCA1 localization to the cell surface and is necessary for its normal activity and stability. Post-translationally, sumoylated by SUMO2 at Lys-395 and Lys-433 during the hepatic acute phase response, leading to promote interaction with GPS2 and prevent N-Cor corepressor complex dissociation.

The protein localises to the nucleus. Functionally, nuclear receptor that exhibits a ligand-dependent transcriptional activation activity. Binds preferentially to double-stranded oligonucleotide direct repeats having the consensus half-site sequence 5'-AGGTCA-3' and 4-nt spacing (DR-4). Regulates cholesterol uptake through MYLIP-dependent ubiquitination of LDLR, VLDLR and LRP8; DLDLR and LRP8. Interplays functionally with RORA for the regulation of genes involved in liver metabolism. Induces LPCAT3-dependent phospholipid remodeling in endoplasmic reticulum (ER) membranes of hepatocytes, driving SREBF1 processing and lipogenesis. Via LPCAT3, triggers the incorporation of arachidonate into phosphatidylcholines of ER membranes, increasing membrane dynamics and enabling triacylglycerols transfer to nascent very low-density lipoprotein (VLDL) particles. Via LPCAT3 also counteracts lipid-induced ER stress response and inflammation, likely by modulating SRC kinase membrane compartmentalization and limiting the synthesis of lipid inflammatory mediators. Plays an anti-inflammatory role during the hepatic acute phase response by acting as a corepressor: inhibits the hepatic acute phase response by preventing dissociation of the N-Cor corepressor complex. The protein is Oxysterols receptor LXR-beta (Nr1h2) of Rattus norvegicus (Rat).